Reading from the N-terminus, the 30-residue chain is 2-enoate reductase (30 aa).

In terms of assembly, dodecamer; tetramer of trimers. Iron-sulfur cluster is required as a cofactor. FAD serves as cofactor. Requires FMN as cofactor.

The catalysed reaction is butanoate + NAD(+) = (2E)-2-butenoate + NADH + H(+). Involved in fermentation of amino acids (Stickland reaction) such as leucine, isoleucine, valine and phenylalanine. The protein is 2-enoate reductase of Clostridium tyrobutyricum.